Consider the following 183-residue polypeptide: Adenine phosphoribosyltransferase (183 aa).

Belongs to the purine/pyrimidine phosphoribosyltransferase family. As to quaternary structure, homodimer.

It is found in the cytoplasm. It catalyses the reaction AMP + diphosphate = 5-phospho-alpha-D-ribose 1-diphosphate + adenine. Its pathway is purine metabolism; AMP biosynthesis via salvage pathway; AMP from adenine: step 1/1. Functionally, catalyzes a salvage reaction resulting in the formation of AMP, that is energically less costly than de novo synthesis. This chain is Adenine phosphoribosyltransferase, found in Shewanella sp. (strain ANA-3).